A 396-amino-acid polypeptide reads, in one-letter code: Ribosomal RNA large subunit methyltransferase I (396 aa).

A PUA domain is found at 2-79 (AVRIKLKPGR…REEEIDREFF (78 aa)).

The protein belongs to the methyltransferase superfamily. RlmI family.

The protein localises to the cytoplasm. It carries out the reaction cytidine(1962) in 23S rRNA + S-adenosyl-L-methionine = 5-methylcytidine(1962) in 23S rRNA + S-adenosyl-L-homocysteine + H(+). Functionally, specifically methylates the cytosine at position 1962 (m5C1962) of 23S rRNA. The protein is Ribosomal RNA large subunit methyltransferase I of Shewanella sp. (strain ANA-3).